We begin with the raw amino-acid sequence, 263 residues long: Type III pantothenate kinase (263 aa).

6–13 (DVGNTRIK) is a binding site for ATP. Residues Y92 and 99-102 (GTDR) contribute to the substrate site. D101 serves as the catalytic Proton acceptor. Residue T124 coordinates ATP. T174 contributes to the substrate binding site.

Belongs to the type III pantothenate kinase family. In terms of assembly, homodimer. NH4(+) is required as a cofactor. Requires K(+) as cofactor.

It localises to the cytoplasm. The enzyme catalyses (R)-pantothenate + ATP = (R)-4'-phosphopantothenate + ADP + H(+). It participates in cofactor biosynthesis; coenzyme A biosynthesis; CoA from (R)-pantothenate: step 1/5. Functionally, catalyzes the phosphorylation of pantothenate (Pan), the first step in CoA biosynthesis. The protein is Type III pantothenate kinase of Azoarcus sp. (strain BH72).